The primary structure comprises 287 residues: Large ribosomal subunit protein uL3 (287 aa).

Residues 228–287 (KAPEAKPAKLSKKKQAKELAKAQAANQQTVEAKVDTPVVEPKPTEVKKAAPVVEKKGEDK) form a disordered region. Basic and acidic residues predominate over residues 269 to 287 (KPTEVKKAAPVVEKKGEDK).

Belongs to the universal ribosomal protein uL3 family. Part of the 50S ribosomal subunit. Forms a cluster with proteins L14 and L19.

Functionally, one of the primary rRNA binding proteins, it binds directly near the 3'-end of the 23S rRNA, where it nucleates assembly of the 50S subunit. The sequence is that of Large ribosomal subunit protein uL3 from Mycoplasma pneumoniae (strain ATCC 29342 / M129 / Subtype 1) (Mycoplasmoides pneumoniae).